Reading from the N-terminus, the 496-residue chain is UDP-N-acetylmuramoyl-L-alanyl-D-glutamate--2,6-diaminopimelate ligase (496 aa).

UDP-N-acetyl-alpha-D-muramoyl-L-alanyl-D-glutamate contacts are provided by L24 and S26. 109–115 is a binding site for ATP; that stretch reads GTNGKTS. Residues 151 to 152, S178, Q184, and R186 contribute to the UDP-N-acetyl-alpha-D-muramoyl-L-alanyl-D-glutamate site; that span reads TT. K218 bears the N6-carboxylysine mark. Residues R387, 411–414, G462, and E466 contribute to the meso-2,6-diaminopimelate site; that span reads DNPR. Positions 411 to 414 match the Meso-diaminopimelate recognition motif motif; that stretch reads DNPR.

The protein belongs to the MurCDEF family. MurE subfamily. The cofactor is Mg(2+). In terms of processing, carboxylation is probably crucial for Mg(2+) binding and, consequently, for the gamma-phosphate positioning of ATP.

Its subcellular location is the cytoplasm. The enzyme catalyses UDP-N-acetyl-alpha-D-muramoyl-L-alanyl-D-glutamate + meso-2,6-diaminopimelate + ATP = UDP-N-acetyl-alpha-D-muramoyl-L-alanyl-gamma-D-glutamyl-meso-2,6-diaminopimelate + ADP + phosphate + H(+). The protein operates within cell wall biogenesis; peptidoglycan biosynthesis. Functionally, catalyzes the addition of meso-diaminopimelic acid to the nucleotide precursor UDP-N-acetylmuramoyl-L-alanyl-D-glutamate (UMAG) in the biosynthesis of bacterial cell-wall peptidoglycan. This is UDP-N-acetylmuramoyl-L-alanyl-D-glutamate--2,6-diaminopimelate ligase from Pseudomonas putida (strain ATCC 47054 / DSM 6125 / CFBP 8728 / NCIMB 11950 / KT2440).